We begin with the raw amino-acid sequence, 101 residues long: Ribonuclease kappa-B (101 aa).

The next 2 membrane-spanning stretches (helical) occupy residues A13–F33 and V68–C88.

This sequence belongs to the RNase K family.

It localises to the membrane. Endoribonuclease which preferentially cleaves ApU and ApG phosphodiester bonds. The polypeptide is Ribonuclease kappa-B (rnasek-b) (Xenopus laevis (African clawed frog)).